The sequence spans 499 residues: Glutamate--tRNA ligase (499 aa).

The short motif at 12–22 is the 'HIGH' region element; it reads PSPTGHLHIGN. The 'KMSKS' region signature appears at 259–263; it reads KLSKR. Lysine 262 is an ATP binding site.

The protein belongs to the class-I aminoacyl-tRNA synthetase family. Glutamate--tRNA ligase type 1 subfamily. As to quaternary structure, monomer.

It localises to the cytoplasm. It carries out the reaction tRNA(Glu) + L-glutamate + ATP = L-glutamyl-tRNA(Glu) + AMP + diphosphate. Catalyzes the attachment of glutamate to tRNA(Glu) in a two-step reaction: glutamate is first activated by ATP to form Glu-AMP and then transferred to the acceptor end of tRNA(Glu). This is Glutamate--tRNA ligase from Lactobacillus gasseri (strain ATCC 33323 / DSM 20243 / BCRC 14619 / CIP 102991 / JCM 1131 / KCTC 3163 / NCIMB 11718 / NCTC 13722 / AM63).